The primary structure comprises 426 residues: Antigen EM13 (426 aa).

One can recognise an F-BAR domain in the interval 1 to 240 (MIQERADIEK…TVAKVDADAD (240 aa)). Disordered stretches follow at residues 287 to 315 (LTSLKTITSPDRGGPIPGTTDSGSNISTS) and 350 to 369 (ISKEKQRVEDTPPYPDFVDD). Positions 305–315 (TTDSGSNISTS) are enriched in polar residues. The SH3 domain occupies 371–426 (RPGVPIRALYDYVGVEADELSFNSGDLFEKLEDEDEQGWCKGRKDGRVGLYPRQLR).

This Echinococcus multilocularis (Fox tapeworm) protein is Antigen EM13 (EM13).